A 193-amino-acid chain; its full sequence is 3-isopropylmalate dehydratase small subunit (193 aa).

Belongs to the LeuD family. LeuD type 1 subfamily. In terms of assembly, heterodimer of LeuC and LeuD.

It catalyses the reaction (2R,3S)-3-isopropylmalate = (2S)-2-isopropylmalate. It participates in amino-acid biosynthesis; L-leucine biosynthesis; L-leucine from 3-methyl-2-oxobutanoate: step 2/4. Functionally, catalyzes the isomerization between 2-isopropylmalate and 3-isopropylmalate, via the formation of 2-isopropylmaleate. This chain is 3-isopropylmalate dehydratase small subunit, found in Bacillus cereus (strain AH820).